The following is a 1278-amino-acid chain: SMC5-SMC6 complex localization factor protein 2 (1278 aa).

Disordered stretches follow at residues 1–235, 248–337, 443–491, and 509–582; these read MTRR…LGAR, EQKK…KRTE, RINS…FIRH, and EPED…KETK. Residues 39-50 are compositionally biased toward basic and acidic residues; sequence KRTESPGDRKQS. Residues 94 to 103 are compositionally biased toward basic residues; it reads SSPKKLKPKR. Basic and acidic residues-rich tracts occupy residues 118-133, 156-174, 180-199, and 248-258; these read GGKEHHKDRGVHESRR, LPKEIKAQKKKHQSPERRK, ESNREKNDRDRGKNSEDSRK, and EQKKLRKEQME. Polar residues-rich tracts occupy residues 259–277 and 318–329; these read QRINSENSFSEASNLSLKS and SDSWELSGSKQN. Basic and acidic residues-rich tracts occupy residues 449–463 and 469–489; these read KEQRNSVDSDLKSTK and KARESFLEKRPDTSHQREKFI. Over residues 519 to 540 the composition is skewed to polar residues; the sequence is ADSAPSNAGHHSSRNSDQVHSA. A Phosphoserine modification is found at S591. 3 disordered regions span residues 598 to 724, 739 to 764, and 798 to 820; these read PLNA…EEEE, RTPTTSGKPPAVSKGLRSQSSDMKEY, and IRQGRGIKSPLRTGDQDSTDDGD. Over residues 609–630 the composition is skewed to basic and acidic residues; that stretch reads PKKDKERSSSKERSGHSTESSK. 3 stretches are compositionally biased toward low complexity: residues 643–654, 666–675, and 688–697; these read SNESSGKNSGGS, PPAALEVVPS, and SGNSNAGSNA. Acidic residues predominate over residues 707 to 724; the sequence is DSDEESLGYTLESDEEEE. Residues S708, S712, and S719 each carry the phosphoserine modification. Residues 740–1278 form an interaction with SIMC1 region; it reads TPTTSGKPPA…QLHDFWVPDS (539 aa). The interval 769–1271 is NSE6-like domain; sequence TYTNTLERLV…NCRPTQGQLH (503 aa). Residues 807-1278 form a required for interaction with SLF1 and RAD18 region; that stretch reads PLRTGDQDST…QLHDFWVPDS (472 aa).

This sequence belongs to the FAM178 family. Forms a heterodimer with SIMC1. Interacts with SLF1 (via N-terminus); this interaction links RAD18 to the SMC5-SMC6 complex. Interacts with RAD18; this interaction is increased in a SLF1-dependent manner. Interacts with SMC5 and SMC6.

Its subcellular location is the nucleus. The protein localises to the PML body. In terms of biological role, plays a role in the DNA damage response (DDR) pathway by regulating postreplication repair of UV-damaged DNA and genomic stability maintenance. The SLF1-SLF2 complex acts to link RAD18 with the SMC5-SMC6 complex at replication-coupled interstrand cross-links (ICL) and DNA double-strand breaks (DSBs) sites on chromatin during DNA repair in response to stalled replication forks. Promotes the recruitment of the SMC5-SMC6 complex to DNA lesions. May play a role in SMC5-SMC6 complex recruitment for viral restriction. Forms a complex with SIMC1 and this complex is required to recruit SMC5-SMC6 complex to PML nuclear bodies and sites of viral replication. The polypeptide is SMC5-SMC6 complex localization factor protein 2 (Mus musculus (Mouse)).